The following is a 652-amino-acid chain: O-fucosyltransferase 15 (652 aa).

Residues 91–111 (TAAFVIVLVGFFIFVNWFMLS) form a helical; Signal-anchor for type II membrane protein membrane-spanning segment. N-linked (GlcNAc...) asparagine glycans are attached at residues N139, N169, and N251. A substrate-binding site is contributed by 426–428 (HLR). N-linked (GlcNAc...) asparagine glycosylation is found at N464, N546, and N607.

Belongs to the glycosyltransferase GT106 family.

It is found in the membrane. It participates in glycan metabolism. In Arabidopsis thaliana (Mouse-ear cress), this protein is O-fucosyltransferase 15.